Here is a 238-residue protein sequence, read N- to C-terminus: Major prion protein (238 aa).

An N-terminal signal peptide occupies residues 1–15 (MLVLFVATWSDLGLC). The segment at 16 to 215 (KKRPKPGGWN…ESQAYYQRGS (200 aa)) is interaction with GRB2, ERI3 and SYN1. The disordered stretch occupies residues 18–93 (RPKPGGWNTG…WHKPSKPKTS (76 aa)). 4 repeat units span residues 44-52 (PQGGGGWGQ), 53-60 (PHGGGWGQ), 61-68 (PHGGGWGQ), and 69-76 (PHGGGWGQ). The interval 44 to 83 (PQGGGGWGQPHGGGWGQPHGGGWGQPHGGGWGQGGGTHNQ) is 4 X 8 AA tandem repeats of P-H-G-G-G-W-G-Q. A compositionally biased stretch (gly residues) spans 45–80 (QGGGGWGQPHGGGWGQPHGGGWGQPHGGGWGQGGGT). Residues glycine 47, glycine 48, histidine 54, glycine 55, glycine 56, histidine 62, glycine 63, glycine 64, histidine 70, glycine 71, and glycine 72 each coordinate Cu(2+). A compositionally biased stretch (basic residues) spans 83 to 93 (QWHKPSKPKTS). The cysteines at positions 164 and 199 are disulfide-linked. Residues asparagine 166 and asparagine 182 are each glycosylated (N-linked (GlcNAc...) asparagine). Residue serine 215 is the site of GPI-anchor amidated serine attachment. Positions 216-238 (SIVLFSSPPVILLISFLIFLIVG) are cleaved as a propeptide — removed in mature form.

This sequence belongs to the prion family. In terms of assembly, monomer and homodimer. Has a tendency to aggregate into amyloid fibrils containing a cross-beta spine, formed by a steric zipper of superposed beta-strands. Soluble oligomers may represent an intermediate stage on the path to fibril formation. Copper binding may promote oligomerization. Interacts with GRB2, APP, ERI3/PRNPIP and SYN1. Mislocalized cytosolically exposed PrP interacts with MGRN1; this interaction alters MGRN1 subcellular location and causes lysosomal enlargement. Interacts with KIAA1191.

The protein resides in the cell membrane. It localises to the golgi apparatus. Its primary physiological function is unclear. Has cytoprotective activity against internal or environmental stresses. May play a role in neuronal development and synaptic plasticity. May be required for neuronal myelin sheath maintenance. May play a role in iron uptake and iron homeostasis. Soluble oligomers are toxic to cultured neuroblastoma cells and induce apoptosis (in vitro). Association with GPC1 (via its heparan sulfate chains) targets PRNP to lipid rafts. Also provides Cu(2+) or Zn(2+) for the ascorbate-mediated GPC1 deaminase degradation of its heparan sulfate side chains. The protein is Major prion protein (PRNP) of Theropithecus gelada (Gelada baboon).